Here is a 47-residue protein sequence, read N- to C-terminus: Thionin (47 aa).

Disulfide bonds link Cys3–Cys41, Cys4–Cys33, Cys12–Cys31, and Cys16–Cys27.

This sequence belongs to the plant thionin (TC 1.C.44) family. 4 C-C subfamily.

It localises to the secreted. Thionins are small plant proteins which are toxic to animal cells. They seem to exert their toxic effect at the level of the cell membrane. Their precise function is not known. This is Thionin (THI1) from Pyrularia pubera (Buffalo nut).